Consider the following 116-residue polypeptide: Ribonuclease P protein component (116 aa).

This sequence belongs to the RnpA family. Consists of a catalytic RNA component (M1 or rnpB) and a protein subunit.

It catalyses the reaction Endonucleolytic cleavage of RNA, removing 5'-extranucleotides from tRNA precursor.. Functionally, RNaseP catalyzes the removal of the 5'-leader sequence from pre-tRNA to produce the mature 5'-terminus. It can also cleave other RNA substrates such as 4.5S RNA. The protein component plays an auxiliary but essential role in vivo by binding to the 5'-leader sequence and broadening the substrate specificity of the ribozyme. The sequence is that of Ribonuclease P protein component from Geobacillus sp. (strain WCH70).